The chain runs to 184 residues: Large ribosomal subunit protein uL6 (184 aa).

Belongs to the universal ribosomal protein uL6 family. In terms of assembly, part of the 50S ribosomal subunit.

Its function is as follows. This protein binds to the 23S rRNA, and is important in its secondary structure. It is located near the subunit interface in the base of the L7/L12 stalk, and near the tRNA binding site of the peptidyltransferase center. The chain is Large ribosomal subunit protein uL6 from Onion yellows phytoplasma (strain OY-M).